Reading from the N-terminus, the 536-residue chain is MPQSPRSAPGLLLLQALVSLVSLALVAPARLQPALWPFPRSVQMFPRLLYISAEDFSIDHSPNSTAGPSCSLLQEAFRRYYNYVFGFYKRHHGPARFRAEPQLQKLLVSITLESECESFPSLSSDETYSLLVQEPVAVLKANSVWGALRGLETFSQLVYQDSFGTFTINESSIADSPRFPHRGILIDTSRHFLPVKTILKTLDAMAFNKFNVLHWHIVDDQSFPYQSTTFPELSNKGSYSLSHVYTPNDVRMVLEYARLRGIRVIPEFDTPGHTQSWGKGQKNLLTPCYNQKTKTQVFGPVDPTVNTTYAFFNTFFKEISSVFPDQFIHLGGDEVEFQCWASNPNIQGFMKRKGFGSDFRRLESFYIKKILEIISSLKKNSIVWQEVFDDKVELQPGTVVEVWKSEHYSYELKQVTGSGFPAILSAPWYLDLISYGQDWKNYYKVEPLNFEGSEKQKQLVIGGEACLWGEFVDATNLTPRLWPRASAVGERLWSPKTVTDLENAYKRLAVHRCRMVSRGIAAQPLYTGYCNYENKI.

A signal peptide spans 1-31 (MPQSPRSAPGLLLLQALVSLVSLALVAPARL). The N-linked (GlcNAc...) asparagine glycan is linked to Asn63. A disulfide bond links Cys70 and Cys116. 2 N-linked (GlcNAc...) asparagine glycosylation sites follow: Asn169 and Asn306. Disulfide bonds link Cys288-Cys339 and Cys513-Cys530. Glu334 (proton donor) is an active-site residue.

It belongs to the glycosyl hydrolase 20 family. There are 3 forms of beta-hexosaminidase: hexosaminidase A is a heterodimer composed of one subunit alpha and one subunit beta (chain A and B); hexosaminidase B is a homodimer of two beta subunits (two chains A and B); hexosaminidase S is a homodimer of two alpha subunits. The composition of the dimer (isozyme A versus isozyme S) has a significant effect on the substrate specificity of the alpha subunit active site.

It is found in the lysosome. It localises to the cytoplasmic vesicle. The protein resides in the secretory vesicle. Its subcellular location is the cortical granule. It catalyses the reaction Hydrolysis of terminal non-reducing N-acetyl-D-hexosamine residues in N-acetyl-beta-D-hexosaminides.. It carries out the reaction N-acetyl-beta-D-galactosaminyl-(1-&gt;4)-beta-D-3-sulfogalactosyl-(1-&gt;4)-beta-D-glucosyl-(1&lt;-&gt;1')-ceramide + H2O = a beta-D-3-sulfogalactosyl-(1-&gt;4)-beta-D-glucosyl-(1&lt;-&gt;1')-ceramide + N-acetyl-beta-D-galactosamine. The catalysed reaction is a ganglioside GM2 (d18:1(4E)) + H2O = a ganglioside GM3 (d18:1(4E)) + N-acetyl-beta-D-galactosamine. The enzyme catalyses a ganglioside GM2 + H2O = a ganglioside GM3 + N-acetyl-beta-D-galactosamine. It catalyses the reaction beta-D-GalNAc-(1-&gt;4)-alpha-L-IdoA-(1-&gt;3)-beta-D-GalNAc-4-sulfate-(1-&gt;4)-alpha-L-IdoA-(1-&gt;3)-D-GalNAc-4-sulfate + H2O = alpha-L-IdoA-(1-&gt;3)-beta-D-GalNAc-4-sulfate-(1-&gt;4)-alpha-L-IdoA-(1-&gt;3)-D-GalNAc-4-sulfate + N-acetyl-D-galactosamine. It carries out the reaction N-acetyl-beta-D-6-sulfogalactosaminyl-(1-&gt;4)-alpha-L-iduronyl-(1-&gt;3)-N-acetyl-D-6-sulfogalactosamine + H2O = alpha-L-iduronyl-(1-&gt;3)-N-acetyl-D-6-sulfogalactosamine + N-acetyl-D-6-sulfogalactosamine. Addition of GM2A stimulates the hydrolysis of sulfated glycosphingolipid SM2 and the ganglioside GM2. Its function is as follows. Hydrolyzes the non-reducing end N-acetyl-D-hexosamine and/or sulfated N-acetyl-D-hexosamine of glycoconjugates, such as the oligosaccharide moieties from proteins and neutral glycolipids, or from certain mucopolysaccharides. The isozyme B does not hydrolyze each of these substrates, however hydrolyzes efficiently neutral oligosaccharide. Only the isozyme A is responsible for the degradation of GM2 gangliosides in the presence of GM2A. During fertilization is responsible, at least in part, for the zona block to polyspermy. Present in the cortical granules of non-activated oocytes, is exocytosed during the cortical reaction in response to oocyte activation and inactivates the sperm galactosyltransferase-binding site, accounting for the block in sperm binding to the zona pellucida. This Mus musculus (Mouse) protein is Beta-hexosaminidase subunit beta.